The following is a 60-amino-acid chain: Large ribosomal subunit protein uL30 (60 aa).

Belongs to the universal ribosomal protein uL30 family. In terms of assembly, part of the 50S ribosomal subunit.

This chain is Large ribosomal subunit protein uL30, found in Lactiplantibacillus plantarum (strain ATCC BAA-793 / NCIMB 8826 / WCFS1) (Lactobacillus plantarum).